The sequence spans 94 residues: Neutrophil antibiotic peptide NP-1 (94 aa).

The N-terminal stretch at 1–19 is a signal peptide; the sequence is MRTLTLLTALLLLALHTQA. Positions 20 to 62 are excised as a propeptide; the sequence is KSPQGTAEEAPDQEQLVMEDQDISISFGGDKGTALQDADVKAG. 3 cysteine pairs are disulfide-bonded: Cys-65/Cys-93, Cys-67/Cys-82, and Cys-72/Cys-92. Residue Tyr-84 is modified to Phosphotyrosine.

This sequence belongs to the alpha-defensin family. As to expression, highest expression in bone marrow and to a much lesser extent in small intestine.

It is found in the secreted. Active in vitro against S.aureus, fungi, Gram-positive and Gram-negative bacteria and to a lesser extent against an enveloped virus. The polypeptide is Neutrophil antibiotic peptide NP-1 (Rattus norvegicus (Rat)).